A 258-amino-acid polypeptide reads, in one-letter code: Trypsin (258 aa).

Positions 1–16 (MIRFTLALAVIGVTFA) are cleaved as a signal peptide. The propeptide at 17–29 (ASTPQIETNPNLE) is activation peptide. The Peptidase S1 domain maps to 30 to 257 (IIGGHDANII…FRDWINEETE (228 aa)). An intrachain disulfide couples Cys55 to Cys71. Catalysis depends on His70, which acts as the Charge relay system. The N-linked (GlcNAc...) asparagine glycan is linked to Asn110. Asp117 (charge relay system) is an active-site residue. Asn130 and Asn188 each carry an N-linked (GlcNAc...) asparagine glycan. Intrachain disulfides connect Cys182-Cys197 and Cys209-Cys233. Ser213 acts as the Charge relay system in catalysis.

Belongs to the peptidase S1 family. Expressed in larval carcasses and gut, and adult gut.

It is found in the secreted. The enzyme catalyses Preferential cleavage: Arg-|-Xaa, Lys-|-Xaa.. The chain is Trypsin from Phaedon cochleariae (Mustard beetle).